A 215-amino-acid chain; its full sequence is Adenylate kinase (215 aa).

ATP is bound at residue 10 to 15 (GAGKGT). An NMP region spans residues 30–59 (STGDLLRAAVAAGTPLGKEAKAYMDRGELV). AMP-binding positions include Thr-31, Arg-36, 57-59 (ELV), 85-88 (GFPR), and Gln-92. An LID region spans residues 126–163 (GRRTCKSCGQMYNVYYSPSKVEGKCDKCGGELFQRDDD). Residue Arg-127 coordinates ATP. Cys-130, Cys-133, Cys-150, and Cys-153 together coordinate Zn(2+). Residues Arg-160 and Arg-171 each coordinate AMP. Gly-199 serves as a coordination point for ATP.

It belongs to the adenylate kinase family. Monomer.

Its subcellular location is the cytoplasm. The catalysed reaction is AMP + ATP = 2 ADP. Its pathway is purine metabolism; AMP biosynthesis via salvage pathway; AMP from ADP: step 1/1. In terms of biological role, catalyzes the reversible transfer of the terminal phosphate group between ATP and AMP. Plays an important role in cellular energy homeostasis and in adenine nucleotide metabolism. This chain is Adenylate kinase, found in Thermodesulfovibrio yellowstonii (strain ATCC 51303 / DSM 11347 / YP87).